The chain runs to 675 residues: MAQVAKKILVTCALPYANGSIHLGHMLEHIQADIWVRFQRMRGNQVHFICADDAHGTPIMLKAQQMGIEPEQMIAEMSQEHQQDFAGFAISYDNYHSTHSDENRELSSLIYGRLKANGYIKNRTISQLYDPEKGMFLPDRFVKGTCPKCKAPEQYGDNCEVCGATYSPTELIDPKSAVSGATPVMRESEHFFFDLPAFSDMLQAWTRSGALQEQVANKMQEWFDSGLQQWDITRDAPYFGFEVPDAPGKYFYVWLDAPIGYMGAFKNLCDKRGDLDFDEFWGKDAKTDLYHFIGKDIVYFHSLFWPAMLEGSNFRKPTNLFVHGYVTVNGAKMSKSRGTFIKAGTYLKYLDADCLRYYYAAKLSSRIDDIDLNLEDFVQRVNADIVNKVVNLASRNAGFINKRFAGQLADQLADPVLYKTFTDAATSIADAYNNRESGKAIREIMALADVANRYVDEQAPWVVAKQEGHDADLHAICSMGINLFRVLMTYLKPVLPSLTERTEAFLNTELTWDSIEQPLLGHSITAFKALFNRIDLDKVNEMVASSKEDMAPATRVTGPLADDPIQETISFDDFAKVDMRIALIQQAEFVEGSDKLLKLTLELGGETRQIFSGIRSAYPDPKALEGRMTVMVANLAPRKMRFGVSEGMVMTAGPGGSDIFLLSPDSGAQPGMQVK.

The 'HIGH' region motif lies at 15–25; it reads PYANGSIHLGH. Cys-146, Cys-149, Cys-159, and Cys-162 together coordinate Zn(2+). Positions 332–336 match the 'KMSKS' region motif; that stretch reads KMSKS. Residue Lys-335 participates in ATP binding. In terms of domain architecture, tRNA-binding spans 573–675; it reads DFAKVDMRIA…SGAQPGMQVK (103 aa).

Belongs to the class-I aminoacyl-tRNA synthetase family. MetG type 1 subfamily. As to quaternary structure, homodimer. The cofactor is Zn(2+).

Its subcellular location is the cytoplasm. The catalysed reaction is tRNA(Met) + L-methionine + ATP = L-methionyl-tRNA(Met) + AMP + diphosphate. In terms of biological role, is required not only for elongation of protein synthesis but also for the initiation of all mRNA translation through initiator tRNA(fMet) aminoacylation. This is Methionine--tRNA ligase from Yersinia pseudotuberculosis serotype I (strain IP32953).